Reading from the N-terminus, the 218-residue chain is MNQSSLLAEFGDPITRVENALLALKEGRGVLLLDDEDRENEGDIIYSVEHLTNAQMALMIRECSGIVCLCLTDEHANKLELPPMVVNNNSANQTAFTVSIEAKQGVTTGVSAQDRVTTIKTAANPSAKADDLARPGHVFPLRARPGGVLARRGHTEGTVDLMQMAGLQPAGVLCELTNPDGTMAKTPEIIAFGKQHNMPVLTIEDMVMYRNQYDLKLA.

D-ribulose 5-phosphate is bound by residues 38-39, Asp-43, 151-155, and Glu-175; these read RE and RRGHT. Glu-39 contributes to the Mg(2+) binding site. His-154 lines the Mg(2+) pocket.

Belongs to the DHBP synthase family. As to quaternary structure, homodimer. Mg(2+) is required as a cofactor. Requires Mn(2+) as cofactor.

It catalyses the reaction D-ribulose 5-phosphate = (2S)-2-hydroxy-3-oxobutyl phosphate + formate + H(+). Its pathway is cofactor biosynthesis; riboflavin biosynthesis; 2-hydroxy-3-oxobutyl phosphate from D-ribulose 5-phosphate: step 1/1. Its function is as follows. Catalyzes the conversion of D-ribulose 5-phosphate to formate and 3,4-dihydroxy-2-butanone 4-phosphate. The polypeptide is 3,4-dihydroxy-2-butanone 4-phosphate synthase (Vibrio vulnificus (strain CMCP6)).